Reading from the N-terminus, the 287-residue chain is Festuclavine synthase II (287 aa).

It belongs to the fgaFS/easG family.

The catalysed reaction is festuclavine + NAD(+) = 6,8-dimethyl-6,7-didehydroergoline + NADH + H(+). It participates in alkaloid biosynthesis; ergot alkaloid biosynthesis. Functionally, festuclavine synthase; part of the gene cluster that mediates the biosynthesis of isofumigaclavines, fungal ergot alkaloids. The tryptophan dimethylallyltransferase ifgA catalyzes the first step of ergot alkaloid biosynthesis by condensing dimethylallyl diphosphate (DMAP) and tryptophan to form 4-dimethylallyl-L-tryptophan. The second step is catalyzed by the methyltransferase ifgB that methylates 4-dimethylallyl-L-tryptophan in the presence of S-adenosyl-L-methionine, resulting in the formation of N-methyl-dimethylallyl-L-tryptophan. The catalase ifgD and the FAD-dependent oxidoreductase ifgC then transform N-methyl-dimethylallyl-L-tryptophan to chanoclavine-I which is further oxidized by ifgE in the presence of NAD(+), resulting in the formation of chanoclavine-I aldehyde. The chanoclavine-I aldehyde reductases ifgG and/or fgaOx3 reduce chanoclavine-I aldehyde to dihydrochanoclavine-I aldehyde that spontaneously dehydrates to form 6,8-dimethyl-6,7-didehydroergoline. The festuclavine dehydrogenases ifgF1 and/or ifgF2 then catalyze the reduction of 6,8-dimethyl-6,7-didehydroergoline to form festuclavine. Hydrolysis of festuclavine by a yet undetermined cytochrome P450 monooxygenase (called ifgH) then leads to the formation of isofumigaclavine B which is in turn acetylated by ifgI to isofumigaclavine A. Penicillium roqueforti has interestingly at least two sets of genes for the consumption of chanoclavine-I aldehyde on three different loci, the OYEs ifgG/fgaOx3 and the festuclavine synthase homologs ifgF1/ifgF2. The reason for the duplication of these genes is unclear, probably to ensure the conversion of chanoclavine-I aldehyde by differential gene expression under various environmental conditions. This chain is Festuclavine synthase II, found in Penicillium roqueforti (strain FM164).